The chain runs to 392 residues: Chalcone synthase B (392 aa).

Cysteine 167 is an active-site residue.

Belongs to the thiolase-like superfamily. Chalcone/stilbene synthases family. As to expression, expressed at low level in seedlings after illumination with UV light. No expression in flowers or tissue culture.

It carries out the reaction (E)-4-coumaroyl-CoA + 3 malonyl-CoA + 3 H(+) = 2',4,4',6'-tetrahydroxychalcone + 3 CO2 + 4 CoA. It functions in the pathway secondary metabolite biosynthesis; flavonoid biosynthesis. Its function is as follows. The primary product of this enzyme is 4,2',4',6'-tetrahydroxychalcone (also termed naringenin-chalcone or chalcone) which can under specific conditions spontaneously isomerize into naringenin. The protein is Chalcone synthase B (CHSB) of Petunia hybrida (Petunia).